The primary structure comprises 203 residues: Glycerol-3-phosphate acyltransferase (203 aa).

The next 4 membrane-spanning stretches (helical) occupy residues 6–26, 82–102, 118–138, and 141–161; these read LTLLMIVAAYLAGSVSSAVLV, AISLGLIAIAACLGHIYPIFF, APIGDDLAICLMASWVVLVLI, and YSSLAAIITALLAPLYTWWLD.

It belongs to the PlsY family. Probably interacts with PlsX.

The protein resides in the cell inner membrane. It catalyses the reaction an acyl phosphate + sn-glycerol 3-phosphate = a 1-acyl-sn-glycero-3-phosphate + phosphate. The protein operates within lipid metabolism; phospholipid metabolism. Catalyzes the transfer of an acyl group from acyl-phosphate (acyl-PO(4)) to glycerol-3-phosphate (G3P) to form lysophosphatidic acid (LPA). This enzyme utilizes acyl-phosphate as fatty acyl donor, but not acyl-CoA or acyl-ACP. The polypeptide is Glycerol-3-phosphate acyltransferase (Shewanella sp. (strain MR-7)).